Here is a 310-residue protein sequence, read N- to C-terminus: MDKIFVEEAVSELHTLQDMIRWTVSRFNAANLFYGHGTDNAWDEAVQLILPTLYLPIDVPPHVLNSRLTGSERLRIVERVIKRINERTPIAYLTNKAWFCGLEFYVDERVLVPRSPIGELIEAQFQPWLIDEPVRIMDLCTGSGCIAIACAHAFPDAEVDAIDISTDALQVAEQNIQDHGMEQQVFPIRSDLFRDLPKEKYDLIVSNPPYVDQEDMNSLPKEFKHEPELGLAAGTDGLKLVRRILANAAGYLTDNGILICEVGNSMVHMMNQYDHIPFTWLEFENGGHGVFMLTRQQLVDCASDFALYID.

The protein belongs to the protein N5-glutamine methyltransferase family. PrmB subfamily.

The enzyme catalyses L-glutaminyl-[ribosomal protein uL3] + S-adenosyl-L-methionine = N(5)-methyl-L-glutaminyl-[ribosomal protein uL3] + S-adenosyl-L-homocysteine + H(+). In terms of biological role, methylates large ribosomal subunit protein uL3 on a specific glutamine residue. This Vibrio anguillarum (strain ATCC 68554 / 775) (Listonella anguillarum) protein is Ribosomal protein uL3 glutamine methyltransferase.